Consider the following 137-residue polypeptide: 6,7-dimethyl-8-ribityllumazine synthase (137 aa).

Residues Phe11, 43 to 45 (SFD), and 67 to 69 (CVI) each bind 5-amino-6-(D-ribitylamino)uracil. 72–73 (DT) lines the (2S)-2-hydroxy-3-oxobutyl phosphate pocket. The active-site Proton donor is the His75. Leu100 is a 5-amino-6-(D-ribitylamino)uracil binding site. Arg115 contributes to the (2S)-2-hydroxy-3-oxobutyl phosphate binding site.

Belongs to the DMRL synthase family. In terms of assembly, forms an icosahedral capsid composed of 60 subunits, arranged as a dodecamer of pentamers.

It catalyses the reaction (2S)-2-hydroxy-3-oxobutyl phosphate + 5-amino-6-(D-ribitylamino)uracil = 6,7-dimethyl-8-(1-D-ribityl)lumazine + phosphate + 2 H2O + H(+). It participates in cofactor biosynthesis; riboflavin biosynthesis; riboflavin from 2-hydroxy-3-oxobutyl phosphate and 5-amino-6-(D-ribitylamino)uracil: step 1/2. Functionally, catalyzes the formation of 6,7-dimethyl-8-ribityllumazine by condensation of 5-amino-6-(D-ribitylamino)uracil with 3,4-dihydroxy-2-butanone 4-phosphate. This is the penultimate step in the biosynthesis of riboflavin. The chain is 6,7-dimethyl-8-ribityllumazine synthase from Methanococcus maripaludis (strain C6 / ATCC BAA-1332).